We begin with the raw amino-acid sequence, 678 residues long: RNA helicase NPH-II (678 aa).

The Helicase ATP-binding domain maps to 175 to 351 (FESWIHHVPV…EFFTESVFVH (177 aa)). An ATP-binding site is contributed by 188-195 (GDTGVGKT). The short motif at 300 to 303 (DEVH) is the DEXH box element. The region spanning 371–546 (SLNKFMYIEE…VFDLQLPEDL (176 aa)) is the Helicase C-terminal domain.

This sequence belongs to the DEAD box helicase family. DEAH subfamily. In terms of assembly, monomer.

Its subcellular location is the virion. It catalyses the reaction ATP + H2O = ADP + phosphate + H(+). Its function is as follows. NTP-dependent helicase that catalyzes unidirectional unwinding of 3'tailed duplex RNAs and plays an important role during transcription of early mRNAs, presumably by preventing R-loop formation behind the elongating RNA polymerase. Might also play a role in the export of newly synthesized mRNA chains out of the core into the cytoplasm. Required for replication and propagation of viral particles. In Oryctolagus cuniculus (Rabbit), this protein is RNA helicase NPH-II (OPG084).